The primary structure comprises 547 residues: Probable ABC transporter periplasmic-binding protein SapA (547 aa).

The first 21 residues, 1–21 (MRQVLSSLLVIAGLVSGQAIA), serve as a signal peptide directing secretion.

This sequence belongs to the bacterial solute-binding protein 5 family.

The protein resides in the periplasm. Functionally, not part of a putrescine export system. Very similar to a S.typhimurium protein implicated in antimicrobial peptide resistance, but the SapBCDF operon in E.coli is implicated in putrescine export. This chain is Probable ABC transporter periplasmic-binding protein SapA (sapA), found in Escherichia coli (strain K12).